The primary structure comprises 61 residues: Sec-independent protein translocase protein TatA (61 aa).

The chain crosses the membrane as a helical span at residues 2-22 (GLSGISPLSLLLILAIIVALF).

This sequence belongs to the TatA/E family. The Tat system comprises two distinct complexes: a TatABC complex, containing multiple copies of TatA, TatB and TatC subunits, and a separate TatA complex, containing only TatA subunits. Substrates initially bind to the TatABC complex, which probably triggers association of the separate TatA complex to form the active translocon.

Its subcellular location is the cell inner membrane. Part of the twin-arginine translocation (Tat) system that transports large folded proteins containing a characteristic twin-arginine motif in their signal peptide across membranes. TatA could form the protein-conducting channel of the Tat system. The polypeptide is Sec-independent protein translocase protein TatA (Legionella pneumophila (strain Corby)).